We begin with the raw amino-acid sequence, 481 residues long: Probable glycine dehydrogenase (decarboxylating) subunit 2 (481 aa).

Residue Lys265 is modified to N6-(pyridoxal phosphate)lysine.

Belongs to the GcvP family. C-terminal subunit subfamily. In terms of assembly, the glycine cleavage system is composed of four proteins: P, T, L and H. In this organism, the P 'protein' is a heterodimer of two subunits. The cofactor is pyridoxal 5'-phosphate.

It catalyses the reaction N(6)-[(R)-lipoyl]-L-lysyl-[glycine-cleavage complex H protein] + glycine + H(+) = N(6)-[(R)-S(8)-aminomethyldihydrolipoyl]-L-lysyl-[glycine-cleavage complex H protein] + CO2. Its function is as follows. The glycine cleavage system catalyzes the degradation of glycine. The P protein binds the alpha-amino group of glycine through its pyridoxal phosphate cofactor; CO(2) is released and the remaining methylamine moiety is then transferred to the lipoamide cofactor of the H protein. This chain is Probable glycine dehydrogenase (decarboxylating) subunit 2, found in Thermosipho melanesiensis (strain DSM 12029 / CIP 104789 / BI429).